A 55-amino-acid chain; its full sequence is MAKGVREKIKLVSSAGTGHFYTTTKNKRTKPEKLELKKFDPVVRQHVVYKEAKIK.

Belongs to the bacterial ribosomal protein bL33 family.

This Pectobacterium carotovorum subsp. carotovorum (strain PC1) protein is Large ribosomal subunit protein bL33.